We begin with the raw amino-acid sequence, 253 residues long: MSDKKTKIQVRDLDLFYASNHALKKINIDIKENEVTALIGPSGCGKSTFLRTLNRMNDLIPIVRIEGEIQVDGKDIYKDDDVIALRTKVGMVFQKPNLFPMSIYDNVAYGPRVHGIKDKKVLDKIVEESLRDAAIWDEVKNRLKSSALGLSGGQQQRICIARAIAMNPEIILMDEPTSALDPISTLKVEELIRKLEDKYTIVIVTHNMQQAARISDKTAFFLNGELVEFSDTNTIFTNPRDKRTEDYITGRFG.

One can recognise an ABC transporter domain in the interval 8–248 (IQVRDLDLFY…PRDKRTEDYI (241 aa)). Position 40 to 47 (40 to 47 (GPSGCGKS)) interacts with ATP.

It belongs to the ABC transporter superfamily. Phosphate importer (TC 3.A.1.7) family. As to quaternary structure, the complex is composed of two ATP-binding proteins (PstB), two transmembrane proteins (PstC and PstA) and a solute-binding protein (PstS).

It localises to the cell membrane. The enzyme catalyses phosphate(out) + ATP + H2O = ADP + 2 phosphate(in) + H(+). Its function is as follows. Part of the ABC transporter complex PstSACB involved in phosphate import. Responsible for energy coupling to the transport system. This is Phosphate import ATP-binding protein PstB from Clostridium perfringens (strain ATCC 13124 / DSM 756 / JCM 1290 / NCIMB 6125 / NCTC 8237 / Type A).